Reading from the N-terminus, the 185-residue chain is Elongation factor P (185 aa).

It belongs to the elongation factor P family.

Its subcellular location is the cytoplasm. The protein operates within protein biosynthesis; polypeptide chain elongation. In terms of biological role, involved in peptide bond synthesis. Stimulates efficient translation and peptide-bond synthesis on native or reconstituted 70S ribosomes in vitro. Probably functions indirectly by altering the affinity of the ribosome for aminoacyl-tRNA, thus increasing their reactivity as acceptors for peptidyl transferase. This chain is Elongation factor P, found in Clostridium perfringens (strain ATCC 13124 / DSM 756 / JCM 1290 / NCIMB 6125 / NCTC 8237 / Type A).